Consider the following 1165-residue polypeptide: Pesticidal crystal protein Cry1Da (1165 aa).

This sequence belongs to the delta endotoxin family.

Its function is as follows. Promotes colloidosmotic lysis by binding to the midgut epithelial cells of many lepidopteran larvae. This is Pesticidal crystal protein Cry1Da (cry1Da) from Bacillus thuringiensis subsp. aizawai.